We begin with the raw amino-acid sequence, 431 residues long: Enolase (431 aa).

(2R)-2-phosphoglycerate is bound at residue glutamine 166. Glutamate 208 (proton donor) is an active-site residue. The Mg(2+) site is built by aspartate 245, glutamate 288, and aspartate 315. (2R)-2-phosphoglycerate-binding residues include lysine 340, arginine 369, serine 370, and lysine 391. Lysine 340 acts as the Proton acceptor in catalysis.

Belongs to the enolase family. It depends on Mg(2+) as a cofactor.

It localises to the cytoplasm. Its subcellular location is the secreted. It is found in the cell surface. It catalyses the reaction (2R)-2-phosphoglycerate = phosphoenolpyruvate + H2O. Its pathway is carbohydrate degradation; glycolysis; pyruvate from D-glyceraldehyde 3-phosphate: step 4/5. Functionally, catalyzes the reversible conversion of 2-phosphoglycerate (2-PG) into phosphoenolpyruvate (PEP). It is essential for the degradation of carbohydrates via glycolysis. The chain is Enolase from Clostridium perfringens (strain ATCC 13124 / DSM 756 / JCM 1290 / NCIMB 6125 / NCTC 8237 / Type A).